The primary structure comprises 225 residues: Cytochrome c oxidase subunit 2 (225 aa).

The Mitochondrial intermembrane segment spans residues 1–25; it reads MSTWMMFMFQESNSFYADNLVSFHN. The chain crosses the membrane as a helical span at residues 26-47; the sequence is LVMMIIIMISTLTIYIIFDLFM. Residues 48-62 lie on the Mitochondrial matrix side of the membrane; sequence NKFSNLFLLKNHNIE. Residues 63-82 form a helical membrane-spanning segment; sequence IIWTIVPIVILLIICFPSLK. Over 83–225 the chain is Mitochondrial intermembrane; it reads ILYLIDEIIN…FFLNWINKQN (143 aa). Cu cation-binding residues include histidine 159, cysteine 194, glutamate 196, cysteine 198, histidine 202, and methionine 205. Glutamate 196 is a binding site for Mg(2+).

Belongs to the cytochrome c oxidase subunit 2 family. Component of the cytochrome c oxidase (complex IV, CIV), a multisubunit enzyme composed of a catalytic core of 3 subunits and several supernumerary subunits. The complex exists as a monomer or a dimer and forms supercomplexes (SCs) in the inner mitochondrial membrane with ubiquinol-cytochrome c oxidoreductase (cytochrome b-c1 complex, complex III, CIII). The cofactor is Cu cation.

The protein localises to the mitochondrion inner membrane. The enzyme catalyses 4 Fe(II)-[cytochrome c] + O2 + 8 H(+)(in) = 4 Fe(III)-[cytochrome c] + 2 H2O + 4 H(+)(out). Component of the cytochrome c oxidase, the last enzyme in the mitochondrial electron transport chain which drives oxidative phosphorylation. The respiratory chain contains 3 multisubunit complexes succinate dehydrogenase (complex II, CII), ubiquinol-cytochrome c oxidoreductase (cytochrome b-c1 complex, complex III, CIII) and cytochrome c oxidase (complex IV, CIV), that cooperate to transfer electrons derived from NADH and succinate to molecular oxygen, creating an electrochemical gradient over the inner membrane that drives transmembrane transport and the ATP synthase. Cytochrome c oxidase is the component of the respiratory chain that catalyzes the reduction of oxygen to water. Electrons originating from reduced cytochrome c in the intermembrane space (IMS) are transferred via the dinuclear copper A center (CU(A)) of subunit 2 and heme A of subunit 1 to the active site in subunit 1, a binuclear center (BNC) formed by heme A3 and copper B (CU(B)). The BNC reduces molecular oxygen to 2 water molecules using 4 electrons from cytochrome c in the IMS and 4 protons from the mitochondrial matrix. The protein is Cytochrome c oxidase subunit 2 (COII) of Apis koschevnikovi (Koschevnikov's honey bee).